A 100-amino-acid polypeptide reads, in one-letter code: Large ribosomal subunit protein uL23 (100 aa).

Belongs to the universal ribosomal protein uL23 family. In terms of assembly, part of the 50S ribosomal subunit. Contacts protein L29, and trigger factor when it is bound to the ribosome.

Its function is as follows. One of the early assembly proteins it binds 23S rRNA. One of the proteins that surrounds the polypeptide exit tunnel on the outside of the ribosome. Forms the main docking site for trigger factor binding to the ribosome. The sequence is that of Large ribosomal subunit protein uL23 from Prochlorococcus marinus (strain MIT 9215).